The sequence spans 208 residues: Large ribosomal subunit protein uL4 (208 aa).

A disordered region spans residues 49 to 78 (HKAKTRAEVRGGGKKPFRQKGTGNARQGST). Residues 69–78 (GTGNARQGST) show a composition bias toward polar residues.

This sequence belongs to the universal ribosomal protein uL4 family. As to quaternary structure, part of the 50S ribosomal subunit.

Its function is as follows. One of the primary rRNA binding proteins, this protein initially binds near the 5'-end of the 23S rRNA. It is important during the early stages of 50S assembly. It makes multiple contacts with different domains of the 23S rRNA in the assembled 50S subunit and ribosome. Forms part of the polypeptide exit tunnel. The chain is Large ribosomal subunit protein uL4 from Chlorobaculum tepidum (strain ATCC 49652 / DSM 12025 / NBRC 103806 / TLS) (Chlorobium tepidum).